The chain runs to 253 residues: Imidazole glycerol phosphate synthase subunit HisF (253 aa).

Residues aspartate 11 and aspartate 130 contribute to the active site.

The protein belongs to the HisA/HisF family. In terms of assembly, heterodimer of HisH and HisF.

It is found in the cytoplasm. It catalyses the reaction 5-[(5-phospho-1-deoxy-D-ribulos-1-ylimino)methylamino]-1-(5-phospho-beta-D-ribosyl)imidazole-4-carboxamide + L-glutamine = D-erythro-1-(imidazol-4-yl)glycerol 3-phosphate + 5-amino-1-(5-phospho-beta-D-ribosyl)imidazole-4-carboxamide + L-glutamate + H(+). It functions in the pathway amino-acid biosynthesis; L-histidine biosynthesis; L-histidine from 5-phospho-alpha-D-ribose 1-diphosphate: step 5/9. In terms of biological role, IGPS catalyzes the conversion of PRFAR and glutamine to IGP, AICAR and glutamate. The HisF subunit catalyzes the cyclization activity that produces IGP and AICAR from PRFAR using the ammonia provided by the HisH subunit. This is Imidazole glycerol phosphate synthase subunit HisF from Clostridium botulinum (strain Okra / Type B1).